Here is a 213-residue protein sequence, read N- to C-terminus: ATP-dependent dethiobiotin synthetase BioD (213 aa).

Residue 12-17 (NVGKTF) coordinates ATP. Residue threonine 16 coordinates Mg(2+). The active site involves lysine 36. Serine 40 is a binding site for substrate. ATP contacts are provided by residues aspartate 53, 110–113 (EGTG), and 170–171 (NQ). The Mg(2+) site is built by aspartate 53 and glutamate 110.

The protein belongs to the dethiobiotin synthetase family. Homodimer. Mg(2+) is required as a cofactor.

It localises to the cytoplasm. It catalyses the reaction (7R,8S)-7,8-diammoniononanoate + CO2 + ATP = (4R,5S)-dethiobiotin + ADP + phosphate + 3 H(+). The protein operates within cofactor biosynthesis; biotin biosynthesis; biotin from 7,8-diaminononanoate: step 1/2. Its function is as follows. Catalyzes a mechanistically unusual reaction, the ATP-dependent insertion of CO2 between the N7 and N8 nitrogen atoms of 7,8-diaminopelargonic acid (DAPA, also called 7,8-diammoniononanoate) to form a ureido ring. The sequence is that of ATP-dependent dethiobiotin synthetase BioD from Ruthia magnifica subsp. Calyptogena magnifica.